The chain runs to 533 residues: tRNA(Ile)-lysidine synthase (533 aa).

ATP is bound at residue 27–32 (SGGSDS).

It belongs to the tRNA(Ile)-lysidine synthase family.

It is found in the cytoplasm. It catalyses the reaction cytidine(34) in tRNA(Ile2) + L-lysine + ATP = lysidine(34) in tRNA(Ile2) + AMP + diphosphate + H(+). In terms of biological role, ligates lysine onto the cytidine present at position 34 of the AUA codon-specific tRNA(Ile) that contains the anticodon CAU, in an ATP-dependent manner. Cytidine is converted to lysidine, thus changing the amino acid specificity of the tRNA from methionine to isoleucine. The chain is tRNA(Ile)-lysidine synthase from Rickettsia peacockii (strain Rustic).